A 401-amino-acid polypeptide reads, in one-letter code: Probable plasmid-partitioning protein ParB (401 aa).

The disordered stretch occupies residues 232–272 (KTRGKENARDKAAAVKEEVKPSKKPKADNGEKTPKGRSHEE).

It belongs to the ParB family.

The protein is Probable plasmid-partitioning protein ParB of Xylella fastidiosa (strain 9a5c).